A 451-amino-acid polypeptide reads, in one-letter code: D-inositol 3-phosphate glycosyltransferase (451 aa).

His37 contacts 1D-myo-inositol 3-phosphate. Residues Gln43–Pro44 and Gly51 contribute to the UDP-N-acetyl-alpha-D-glucosamine site. Residues Asp48–Asn53, Lys106, Tyr138, Thr162, and Arg182 each bind 1D-myo-inositol 3-phosphate. Positions 259, 264, and 323 each coordinate UDP-N-acetyl-alpha-D-glucosamine. Mg(2+) contacts are provided by Tyr332, Arg333, and Ala335. Residues Glu345 and Glu353 each contribute to the UDP-N-acetyl-alpha-D-glucosamine site. Mg(2+) is bound at residue Thr359.

It belongs to the glycosyltransferase group 1 family. MshA subfamily. As to quaternary structure, homodimer.

It catalyses the reaction 1D-myo-inositol 3-phosphate + UDP-N-acetyl-alpha-D-glucosamine = 1D-myo-inositol 2-acetamido-2-deoxy-alpha-D-glucopyranoside 3-phosphate + UDP + H(+). Catalyzes the transfer of a N-acetyl-glucosamine moiety to 1D-myo-inositol 3-phosphate to produce 1D-myo-inositol 2-acetamido-2-deoxy-glucopyranoside 3-phosphate in the mycothiol biosynthesis pathway. This is D-inositol 3-phosphate glycosyltransferase from Corynebacterium kroppenstedtii (strain DSM 44385 / JCM 11950 / CIP 105744 / CCUG 35717).